Consider the following 757-residue polypeptide: MDVNPTLLFLKVPAQNAISTTFPYTGDPPYSHGTGTGYTMDTVNRTHQYSERGRWTKNTETGAPQLNPIDGPLPEDNEPSGYAQTDCVLEAMAFLEESHPGIFENSCIETMEVVQQTRVDKLTQGRQTYDWTLNRNQPAATALANTIEVFRSNGLMANESGRLIDFLKDVMESMDKEEMEVTTHFQRKRRVRDNVTKKMVTQRTIGKKKQRLNKRSYLIRALTLNTMTKDAERGKLKRRAIATPGMQIRGFVYFVETLARSICEKLEQSGLPVGGNEKKAKLANVVRKMMTNSQDTEISFTITGDNTKWNENQNPRMFLAMITYITRNQPEWFRNILSIAPIMFSNKMARLGKGYMFESKSMKLRTQIPAEMIANIDLKYFNDSTRKKIEKIRPLLIDGTASLSPGMMMGMFNMLSTVLGVSILNLGQKRYTKTTYWWDGLQSSDDFALIVNAPNHAGIQAGVDRFYRTCKLLGINMSKKKSYINRTGTFEFTSFFYRYGFVANFSMELPSFGVSGINESADMSIGVTVIKNNMINNDLGPATAQMALQLFIKDYRYTYRCHRGDTQIQTRRSFEIKKLWEQTRSKAGLLVSDGGPNLYNIRNLHIPEVCLKWELMDEDYQGRLCNPLNPFVSHKEIESVNNAVMMPAHGPAKNMEYDAVATTHSWVPKRNRSILNTSQRGILEDEQMYQRCCNLFEKFFPSSSYRRPVGISSMVEAMVSRARIDARIDFESGRIKKEDFTEIMKICSTIEELRRQK.

The segment at 50–82 is disordered; that stretch reads SERGRWTKNTETGAPQLNPIDGPLPEDNEPSGY. 2 consecutive short sequence motifs (nuclear localization signal) follow at residues 187–195 and 203–216; these read RKRRVRDNV and RTIG…NKRS. The tract at residues 249 to 256 is promoter-binding site; sequence RGFVYFVE. The 198-residue stretch at 286–483 folds into the RdRp catalytic domain; sequence VRKMMTNSQD…GINMSKKKSY (198 aa).

Belongs to the influenza viruses polymerase PB1 family. Influenza RNA polymerase is composed of three subunits: PB1, PB2 and PA. Interacts (via N-terminus) with PA (via C-terminus). Interacts (via C-terminus) with PB2 (via N-terminus); this interaction is essential for transcription initiation. Interacts (via C-terminus) with human PKP2 (via N-terminus); the interaction competitively inhibits the interaction between the RNA polymerase subunits PB1 and PB2. In terms of processing, phosphorylated by host PRKCA.

The protein localises to the host nucleus. The protein resides in the host cytoplasm. It catalyses the reaction RNA(n) + a ribonucleoside 5'-triphosphate = RNA(n+1) + diphosphate. RNA-dependent RNA polymerase which is responsible for replication and transcription of virus RNA segments. The transcription of viral mRNAs occurs by a unique mechanism called cap-snatching. 5' methylated caps of cellular mRNAs are cleaved after 10-13 nucleotides by PA. In turn, these short capped RNAs are used as primers by PB1 for transcription of viral mRNAs. During virus replication, PB1 initiates RNA synthesis and copy vRNA into complementary RNA (cRNA) which in turn serves as a template for the production of more vRNAs. The sequence is that of RNA-directed RNA polymerase catalytic subunit from Influenza A virus (strain A/USA:Albany/12/1951 H1N1).